Reading from the N-terminus, the 154-residue chain is Interleukin-2 (154 aa).

Residues 1–20 form the signal peptide; it reads MYRMQLLSCIALSLALVTNS. The O-linked (GalNAc...) threonine glycan is linked to Thr-23. Cys-78 and Cys-126 are joined by a disulfide.

This sequence belongs to the IL-2 family.

The protein resides in the secreted. Functionally, cytokine produced by activated CD4-positive helper T-cells and to a lesser extend activated CD8-positive T-cells and natural killer (NK) cells that plays pivotal roles in the immune response and tolerance. Binds to a receptor complex composed of either the high-affinity trimeric IL-2R (IL2RA/CD25, IL2RB/CD122 and IL2RG/CD132) or the low-affinity dimeric IL-2R (IL2RB and IL2RG). Interaction with the receptor leads to oligomerization and conformation changes in the IL-2R subunits resulting in downstream signaling starting with phosphorylation of JAK1 and JAK3. In turn, JAK1 and JAK3 phosphorylate the receptor to form a docking site leading to the phosphorylation of several substrates including STAT5. This process leads to activation of several pathways including STAT, phosphoinositide-3-kinase/PI3K and mitogen-activated protein kinase/MAPK pathways. Functions as a T-cell growth factor and can increase NK-cell cytolytic activity as well. Promotes strong proliferation of activated B-cells and subsequently immunoglobulin production. Plays a pivotal role in regulating the adaptive immune system by controlling the survival and proliferation of regulatory T-cells, which are required for the maintenance of immune tolerance. Moreover, participates in the differentiation and homeostasis of effector T-cell subsets, including Th1, Th2, Th17 as well as memory CD8-positive T-cells. The chain is Interleukin-2 (IL2) from Macaca fascicularis (Crab-eating macaque).